Here is a 331-residue protein sequence, read N- to C-terminus: D-alanine--D-alanine ligase (331 aa).

Positions 121–327 (KLWYDALGIP…FSQFLENCVR (207 aa)) constitute an ATP-grasp domain. 151–206 (AFESWGKVFVKAARQGSSVGCYQVNQVEELSEAINKAFTFSDQVLIEKSVVPRELE) is a binding site for ATP. Residues aspartate 281, glutamate 294, and asparagine 296 each contribute to the Mg(2+) site.

This sequence belongs to the D-alanine--D-alanine ligase family. It depends on Mg(2+) as a cofactor. Requires Mn(2+) as cofactor.

Its subcellular location is the cytoplasm. The enzyme catalyses 2 D-alanine + ATP = D-alanyl-D-alanine + ADP + phosphate + H(+). It functions in the pathway cell wall biogenesis; peptidoglycan biosynthesis. Functionally, cell wall formation. This is D-alanine--D-alanine ligase from Vibrio atlanticus (strain LGP32) (Vibrio splendidus (strain Mel32)).